The chain runs to 20 residues: Kassinatuerin-2 (20 aa).

Residue Ile20 is modified to Isoleucine amide.

As to expression, expressed by the skin dorsal glands.

It localises to the secreted. Functionally, has no antimicrobial activities against bacteria (E.coli and S.aureus) nor against the fungus C.albicans. In Kassina senegalensis (Senegal running frog), this protein is Kassinatuerin-2.